A 65-amino-acid polypeptide reads, in one-letter code: MALPKNLIPMPRSRFLRVKCIDCGNEQIVFSHPATPVRCLVCGATLVEPTGGKGIIKAKVLEVLE.

Residues C20, C23, C39, and C42 each contribute to the Zn(2+) site. Residues 20–42 (CIDCGNEQIVFSHPATPVRCLVC) form a C4-type zinc finger.

It belongs to the eukaryotic ribosomal protein eS27 family. In terms of assembly, part of the 30S ribosomal subunit. It depends on Zn(2+) as a cofactor.

The polypeptide is Small ribosomal subunit protein eS27 (Thermococcus kodakarensis (strain ATCC BAA-918 / JCM 12380 / KOD1) (Pyrococcus kodakaraensis (strain KOD1))).